A 205-amino-acid chain; its full sequence is Urease accessory protein UreG (205 aa).

11 to 18 serves as a coordination point for GTP; sequence GPVGSGKT.

Belongs to the SIMIBI class G3E GTPase family. UreG subfamily. As to quaternary structure, homodimer. UreD, UreF and UreG form a complex that acts as a GTP-hydrolysis-dependent molecular chaperone, activating the urease apoprotein by helping to assemble the nickel containing metallocenter of UreC. The UreE protein probably delivers the nickel.

It localises to the cytoplasm. Functionally, facilitates the functional incorporation of the urease nickel metallocenter. This process requires GTP hydrolysis, probably effectuated by UreG. The protein is Urease accessory protein UreG of Prochlorococcus marinus (strain NATL2A).